Reading from the N-terminus, the 227-residue chain is Uracil-DNA glycosylase (227 aa).

Residue Asp-64 is the Proton acceptor of the active site.

This sequence belongs to the uracil-DNA glycosylase (UDG) superfamily. UNG family.

The protein localises to the cytoplasm. It carries out the reaction Hydrolyzes single-stranded DNA or mismatched double-stranded DNA and polynucleotides, releasing free uracil.. Its function is as follows. Excises uracil residues from the DNA which can arise as a result of misincorporation of dUMP residues by DNA polymerase or due to deamination of cytosine. The sequence is that of Uracil-DNA glycosylase from Sodalis glossinidius (strain morsitans).